The following is a 361-amino-acid chain: Free fatty acid receptor 4 (361 aa).

At M1–T45 the chain is on the extracellular side. N-linked (GlcNAc...) asparagine glycosylation occurs at N21. A helical membrane pass occupies residues V46 to A66. The Cytoplasmic portion of the chain corresponds to R67 to L77. A helical membrane pass occupies residues V78 to V98. Residues R99–H112 are Extracellular-facing. C111 and C194 are joined by a disulfide. A helical membrane pass occupies residues L113–S133. The Cytoplasmic portion of the chain corresponds to L134–A156. Residues V157 to F177 traverse the membrane as a helical segment. The Extracellular segment spans residues R178 to E204. A helical transmembrane segment spans residues I205 to I225. Over S226–L268 the chain is Cytoplasmic. Residues L269–I289 form a helical membrane-spanning segment. The Extracellular portion of the chain corresponds to Q290–D295. A helical membrane pass occupies residues L296–L316. Topologically, residues N317–G361 are cytoplasmic. Phosphothreonine is present on residues T347 and T349. A phosphoserine mark is found at S350, S357, and S360.

The protein belongs to the G-protein coupled receptor 1 family. Interacts (via C-terminus) with ARRB2 following LCFAs stimulation. Phosphorylated at two clusters of Ser and Thr residues located in the intracellular C-terminus. Prerequisite for FFAR4 internalization via an ARRB2-dependent pathway. Highly expressed in lung and colon.

It localises to the cell membrane. It is found in the endosome membrane. The protein resides in the lysosome membrane. Its subcellular location is the cell projection. The protein localises to the cilium membrane. G-protein-coupled receptor for long-chain fatty acids (LCFAs) with a major role in adipogenesis, energy metabolism and inflammation. Signals via G-protein and beta-arrestin pathways. LCFAs sensing initiates activation of phosphoinositidase C-linked G proteins GNAQ and GNA11 (G(q)/G(11)), inducing a variety of cellular responses via second messenger pathways such as intracellular calcium mobilization, modulation of cyclic adenosine monophosphate (cAMP) production, and mitogen-activated protein kinases (MAPKs). After LCFAs binding, associates with beta-arrestin ARRB2 that acts as an adapter protein coupling the receptor to specific downstream signaling pathways, as well as mediating receptor endocytosis. In response to dietary fats, plays an important role in the regulation of adipocyte proliferation and differentiation. Acts as a receptor for omega-3 polyunsaturated fatty acids (PUFAs) at primary cilium of perivascular preadipocytes, initiating an adipogenic program via cAMP and CTCF-dependent chromatin remodeling that ultimately results in transcriptional activation of adipogenic genes and cell cycle entry. Induces differentiation of brown and beige adipocytes probably via autocrine and endocrine functions of FGF21 hormone. Contributes to the thermogenic activation of brown adipose tissue and the browning of white adipose tissue. Activates brown adipocytes by initiating intracellular calcium signaling leading to mitochondrial depolarization and fission, and overall increased mitochondrial respiration. Consequently stimulates fatty acid uptake and oxidation in mitochondria together with UCP1-mediated thermogenic respiration, eventually reducing fat mass. Regulates bi-potential differentiation of bone marrow mesenchymal stem cells toward osteoblasts or adipocytes likely by up-regulating distinct integrins. In response to dietary fats regulates hormone secretion and appetite. Stimulates GIP and GLP1 secretion from enteroendocrine cells as well as GCG secretion in pancreatic alpha cells, thereby playing a role in the regulation of blood glucose levels. Negatively regulates glucose-induced SST secretion in pancreatic delta cells. Mediates LCFAs inhibition of GHRL secretion, an appetite-controlling hormone. In taste buds, contributes to sensing of dietary fatty acids by the gustatory system. During the inflammatory response, promotes anti-inflammatory M2 macrophage differentiation in adipose tissue. Mediates the anti-inflammatory effects of omega-3 PUFAs via inhibition of NLRP3 inflammasome activation. In this pathway, interacts with adapter protein ARRB2 and inhibits the priming step triggered by Toll-like receptors (TLRs) at the level of TAK1 and TAB1. Further inhibits the activation step when ARRB2 directly associates with NLRP3, leading to inhibition of pro-inflammatory cytokine release. Mediates LCFAs anti-apoptotic effects. In Macaca fascicularis (Crab-eating macaque), this protein is Free fatty acid receptor 4 (FFAR4).